A 71-amino-acid chain; its full sequence is Palustrin-Ca (71 aa).

The signal sequence occupies residues 1-22 (MFTLKKSLLLLFFLGTISLSLC). The propeptide occupies 23–40 (EQERDADGDEGEVEEVKR). A disulfide bond links C63 and C69.

Belongs to the frog skin active peptide (FSAP) family. Brevinin subfamily. As to expression, expressed by the skin glands.

It is found in the secreted. Its subcellular location is the target cell membrane. In terms of biological role, antibacterial peptide with amphipathic alpha-helical structure that exhibits potent broad-spectrum activity against Gram-positive and -negative bacteria. It is active against Listeria ATCC 54004 (MIC=30 ug/ml), S.aureus ATCC 25923 (MIC=7.8 ug/ml), S.suis 2 CVCC 606 (MIC=31.25 ug/ml), B.subtilis ADB403 (30 ug/ml), K.pneumoniae ATCC 700603 (MIC=60 ug/ml) and P.aeruginosa ATCC 227853 (MIC=30 ug/ml). Does not show activity against Salmonella ATCC 20020 and the fungus Candida albicans. Is also cytotoxic to HeLa cells at high concentrations. In addition, shows a strong antitumor activity but only a little hemolytic activity. Despite the presence of a Gly residue at position 10, this alpha-helical peptide remains relatively rigid, not exhibiting any significant flexibility during the molecular dynamics simulation. The peptide shows a preference for a position parallel to the target membrane that suggests it exerts its antimicrobial activity through a non-pore-forming mechanism of action, such as the carpet model or the interfacial activity model. The protein is Palustrin-Ca of Aquarana catesbeiana (American bullfrog).